The sequence spans 133 residues: MGGALSTVFGSGEDATAAGTESEPSRVLKFSSSARWQLHFNEIKESNKLLVVDFSASWCGPCRMIEPAIHAMADKFNDVDFVKLDVDELPDVAKEFNVTAMPTFVLVKRGKEIERIIGAKKDELEKKVSKLRA.

The interval 1-22 (MGGALSTVFGSGEDATAAGTES) is disordered. Residues 6–133 (STVFGSGEDA…LEKKVSKLRA (128 aa)) form the Thioredoxin domain. Residues Cys59 and Cys62 each act as nucleophile in the active site. Cys59 and Cys62 are joined by a disulfide.

Belongs to the thioredoxin family. Plant H-type subfamily. As to quaternary structure, interacts with MDH1.

The protein resides in the cytoplasm. Its subcellular location is the mitochondrion. Its function is as follows. Thiol-disulfide oxidoreductase probably involved in the redox regulation of a number of cytosolic enzymes. Possesses insulin disulfide bonds reducing activity. The sequence is that of Thioredoxin H2 (TRX2) from Arabidopsis thaliana (Mouse-ear cress).